Consider the following 84-residue polypeptide: Small ribosomal subunit protein uS17 (84 aa).

This sequence belongs to the universal ribosomal protein uS17 family. As to quaternary structure, part of the 30S ribosomal subunit.

Its function is as follows. One of the primary rRNA binding proteins, it binds specifically to the 5'-end of 16S ribosomal RNA. In Buchnera aphidicola subsp. Cinara cedri (strain Cc), this protein is Small ribosomal subunit protein uS17.